A 474-amino-acid polypeptide reads, in one-letter code: tRNA-2-methylthio-N(6)-dimethylallyladenosine synthase (474 aa).

One can recognise an MTTase N-terminal domain in the interval 3-120; that stretch reads QKLHIKTWGC…LPEMINQIRG (118 aa). 6 residues coordinate [4Fe-4S] cluster: Cys-12, Cys-49, Cys-83, Cys-157, Cys-161, and Cys-164. A Radical SAM core domain is found at 143 to 375; the sequence is RAEGPTAFVS…QERINQQAAQ (233 aa). The TRAM domain occupies 378-441; it reads RRMLGTEQRV…TNSLRGEVVR (64 aa).

It belongs to the methylthiotransferase family. MiaB subfamily. Monomer. [4Fe-4S] cluster is required as a cofactor.

It is found in the cytoplasm. It carries out the reaction N(6)-dimethylallyladenosine(37) in tRNA + (sulfur carrier)-SH + AH2 + 2 S-adenosyl-L-methionine = 2-methylsulfanyl-N(6)-dimethylallyladenosine(37) in tRNA + (sulfur carrier)-H + 5'-deoxyadenosine + L-methionine + A + S-adenosyl-L-homocysteine + 2 H(+). Its function is as follows. Catalyzes the methylthiolation of N6-(dimethylallyl)adenosine (i(6)A), leading to the formation of 2-methylthio-N6-(dimethylallyl)adenosine (ms(2)i(6)A) at position 37 in tRNAs that read codons beginning with uridine. The polypeptide is tRNA-2-methylthio-N(6)-dimethylallyladenosine synthase (Haemophilus influenzae (strain PittEE)).